The chain runs to 1005 residues: Defense-associated sirtuin 2 (1005 aa).

Residues Met-1–Glu-295 are SIR2. The tract at residues Tyr-56 to Asp-111 is inter-dimer interaction. Catalysis depends on residues Tyr-134, Asp-135, and His-171. The interval Ser-296–Asn-548 is MID. Residues Gln-549–Ile-1005 are CTD.

Homotetramer (dimer of dimers). Homodimer. The SIR2 domains are arranged in a central core, adopting a head-to-head arrangement, while the CTDs are positioned at the periphery of the complex. Tetramerization is necessary for the activation of NADase activity. The NADase enzymatic activity of this homotetrameric form is autoinhibited. The activated form of DSR2 (after binding to the phage tube protein) exists as tetramers and dimers, with the tetramers exhibiting more NADase activity. Each tetramer binds 4 NAD(+) molecules. As to quaternary structure, (Microbial infection) Interacts (via C-terminus) with phage SPR tail tube monomer protein (via N-terminus) in a 4:4 DSR2-Tube assembly; this interaction induces a conformation change of the tube protein and activates the NADase activity of DSR2. In terms of assembly, (Microbial infection) Interacts (via C-terminus) with phage SPbeta DSAD1 in a 4:2 ratio; this interaction prevents activation of the NADase defense activity of DSR2.

The catalysed reaction is NAD(+) + H2O = ADP-D-ribose + nicotinamide + H(+). (Microbial infection) NADase activity is activated through the binding of SPR phage tail tube monomer protein. NADase activity is inhibited through the binding to the phage SPbeta DSR anti-defense 1 (DSAD1). Its function is as follows. Anti-phage defense protein that is activated through the binding to the phage tail tube protein monomer and which hydrolyzes NAD+ upon activation (NADase activity). The resulting depletion of NAD(+) leads to an abortive infection. This is Defense-associated sirtuin 2 from Bacillus subtilis.